The sequence spans 458 residues: Serine/threonine-protein kinase tricornered (458 aa).

In terms of domain architecture, Protein kinase spans 92 to 389 (FEALKVIGRG…LEDLKSVPFF (298 aa)). ATP is bound by residues 98–106 (IGRGAFGEV) and lysine 121. Positions 118–179 (YAMKVLRKAD…EFLPGGDMMT (62 aa)) are interaction with mats and Mob1. Aspartate 215 (proton acceptor) is an active-site residue. Position 287 is a phosphoserine (serine 287). Positions 390–458 (RGVDWEHIRE…YKRFEVRNLE (69 aa)) constitute an AGC-kinase C-terminal domain. Threonine 448 is subject to Phosphothreonine.

The protein belongs to the protein kinase superfamily. AGC Ser/Thr protein kinase family. As to quaternary structure, interacts with, and is activated by, Mob1. The cofactor is Mg(2+).

It is found in the cytoplasm. The protein localises to the nucleus. It catalyses the reaction L-seryl-[protein] + ATP = O-phospho-L-seryl-[protein] + ADP + H(+). The catalysed reaction is L-threonyl-[protein] + ATP = O-phospho-L-threonyl-[protein] + ADP + H(+). Functionally, serine/threonine-protein kinase involved in controlling cell structure and proliferation of a variety of polarized outgrowths including epidermal hairs, bristles, arista laterals, and dendrites. Together with fry, maintains the integrity of epidermal hairs and is an essential component of the signaling pathway regulating dendritic branching of sensory neurons. Reduces neurite outgrowth by phosphorylating pav/pavarotti, thereby inhibiting its function in microtubule-microtubule sliding. This Drosophila pseudoobscura pseudoobscura (Fruit fly) protein is Serine/threonine-protein kinase tricornered.